A 560-amino-acid polypeptide reads, in one-letter code: Ubiquitin carboxyl-terminal hydrolase MINDY-3 homolog (560 aa).

Residues 1 to 13 show a composition bias toward basic and acidic residues; it reads MNEKIVREQRGGE. Disordered regions lie at residues 1–30 and 44–91; these read MNEK…AASA and SHKT…MLNA. 2 stretches are compositionally biased toward low complexity: residues 15 to 30 and 52 to 81; these read SPSS…AASA and TASS…SSSS. C139 functions as the Nucleophile in the catalytic mechanism. Positions 203–237 are disordered; the sequence is TEAGSTKKRSPAGEEESALAGQAAGSSEEVEEAAE. Phosphoserine occurs at positions 212 and 219. H403 serves as the catalytic Proton acceptor.

The protein belongs to the MINDY deubiquitinase family. FAM188 subfamily.

The enzyme catalyses Thiol-dependent hydrolysis of ester, thioester, amide, peptide and isopeptide bonds formed by the C-terminal Gly of ubiquitin (a 76-residue protein attached to proteins as an intracellular targeting signal).. Its function is as follows. Hydrolase that can remove 'Lys-48'-linked conjugated ubiquitin from proteins. The chain is Ubiquitin carboxyl-terminal hydrolase MINDY-3 homolog (mindy3) from Drosophila melanogaster (Fruit fly).